Here is a 634-residue protein sequence, read N- to C-terminus: Kelch-like protein 22 (634 aa).

At Ala-2 the chain carries N-acetylalanine. The region spanning Phe-50–Leu-117 is the BTB domain. 6 Kelch repeats span residues Cys-299 to Asn-349, Phe-350 to Lys-399, Tyr-400 to Gly-446, Met-448 to Asp-493, Leu-495 to Ser-544, and Arg-545 to Leu-593. Phosphothreonine is present on Thr-463. The residue at position 466 (Tyr-466) is a Phosphotyrosine. Residue Thr-475 is modified to Phosphothreonine. Positions Glu-600 to Asp-634 are disordered. At Thr-605 the chain carries Phosphothreonine. Acidic residues predominate over residues Asp-624–Asp-634.

Component of the BCR(KLHL22) E3 ubiquitin ligase complex, at least composed of CUL3, KLHL22 and RBX1. Interacts with PLK1. Interacts with DEPDC5 (via DEP domain); the interaction depends on amino acid availability. Interacts with YWHAE; required for the nuclear localization of KLHL22 upon amino acid starvation.

The protein resides in the cytoplasm. The protein localises to the cytosol. It is found in the cytoskeleton. Its subcellular location is the microtubule organizing center. It localises to the centrosome. The protein resides in the spindle. The protein localises to the nucleus. It is found in the lysosome. It participates in protein modification; protein ubiquitination. Functionally, substrate-specific adapter of a BCR (BTB-CUL3-RBX1) E3 ubiquitin ligase complex required for chromosome alignment and localization of PLK1 at kinetochores. The BCR(KLHL22) ubiquitin ligase complex mediates monoubiquitination of PLK1, leading to PLK1 dissociation from phosphoreceptor proteins and subsequent removal from kinetochores, allowing silencing of the spindle assembly checkpoint (SAC) and chromosome segregation. Monoubiquitination of PLK1 does not lead to PLK1 degradation. The BCR(KLHL22) ubiquitin ligase complex is also responsible for the amino acid-stimulated 'Lys-48' polyubiquitination and proteasomal degradation of DEPDC5. Through the degradation of DEPDC5, releases the GATOR1 complex-mediated inhibition of the TORC1 pathway. It is therefore an amino acid-dependent activator within the amino acid-sensing branch of the TORC1 pathway, indirectly regulating different cellular processes including cell growth and autophagy. The sequence is that of Kelch-like protein 22 from Mus musculus (Mouse).